The chain runs to 333 residues: Ribosomal RNA small subunit methyltransferase C (333 aa).

Belongs to the methyltransferase superfamily. RsmC family. Monomer.

Its subcellular location is the cytoplasm. It carries out the reaction guanosine(1207) in 16S rRNA + S-adenosyl-L-methionine = N(2)-methylguanosine(1207) in 16S rRNA + S-adenosyl-L-homocysteine + H(+). In terms of biological role, specifically methylates the guanine in position 1207 of 16S rRNA in the 30S particle. This is Ribosomal RNA small subunit methyltransferase C from Actinobacillus succinogenes (strain ATCC 55618 / DSM 22257 / CCUG 43843 / 130Z).